Consider the following 463-residue polypeptide: RuvB-like 2 (463 aa).

An N-acetylalanine modification is found at A2. K9 participates in a covalent cross-link: Glycyl lysine isopeptide (Lys-Gly) (interchain with G-Cter in SUMO2). 77 to 84 (GQPGTGKT) contacts ATP. S437 carries the phosphoserine modification. Residues K444 and K456 each participate in a glycyl lysine isopeptide (Lys-Gly) (interchain with G-Cter in SUMO2) cross-link.

It belongs to the RuvB family. In terms of assembly, forms homohexameric rings. Can form a dodecamer with RUVBL1 made of two stacked hexameric rings; however, even though RUVBL1 and RUVBL2 are present in equimolar ratio, the oligomeric status of each hexamer is not known. Oligomerization may regulate binding to nucleic acids and conversely, binding to nucleic acids may affect the dodecameric assembly. Interaction of the complex with DHX34 results in conformational changes of the N-terminus of the RUVBL2 subunits, resulting in loss of nucleotide binding ability and ATP hydrolysis of the complex. Interacts with the transcriptional activation domain of MYC. Interacts with ATF2. Component of the RNA polymerase II holoenzyme complex. May also act to bridge the LEF1/TCF1-CTNNB1 complex and TBP. Component of the NuA4 histone acetyltransferase complex which contains the catalytic subunit KAT5/TIP60 and the subunits EP400, TRRAP/PAF400, BRD8/SMAP, EPC1, DMAP1/DNMAP1, RUVBL1/TIP49, RUVBL2, ING3, actin, ACTL6A/BAF53A, MORF4L1/MRG15, MORF4L2/MRGX, MRGBP, YEATS4/GAS41, VPS72/YL1 and MEAF6. The NuA4 complex interacts with MYC and the adenovirus E1A protein. RUVBL2 interacts with EP400. Component of a NuA4-related complex which contains EP400, TRRAP/PAF400, SRCAP, BRD8/SMAP, EPC1, DMAP1/DNMAP1, RUVBL1/TIP49, RUVBL2, actin, ACTL6A/BAF53A, VPS72 and YEATS4/GAS41. Interacts with NPAT. Component of the chromatin-remodeling INO80 complex; specifically part of a complex module associated with the helicase ATP-binding and the helicase C-terminal domain of INO80. Component of some MLL1/MLL complex, at least composed of the core components KMT2A/MLL1, ASH2L, HCFC1/HCF1, WDR5 and RBBP5, as well as the facultative components BACC1, CHD8, E2F6, HSP70, INO80C, KANSL1, LAS1L, MAX, MCRS1, MGA, MYST1/MOF, PELP1, PHF20, PRP31, RING2, RUVB1/TIP49A, RUVB2/TIP49B, SENP3, TAF1, TAF4, TAF6, TAF7, TAF9 and TEX10. Interacts with IGHMBP2. Interacts with TELO2. Interacts with HINT1. Component of a SWR1-like complex. Component of the R2TP complex composed at least of RUVBL1, RUVBL2, RPAP3 and PIHD1. Component of the PAQosome complex which is responsible for the biogenesis of several protein complexes and which consists of R2TP complex members RUVBL1, RUVBL2, RPAP3 and PIH1D1, URI complex members PFDN2, PFDN6, PDRG1, UXT and URI1 as well as ASDURF, POLR2E and DNAAF10/WDR92. Interacts with ITFG1. Interacts with ZMYND10. Interacts with WAC; WAC positively regulates MTOR activity by promoting the assembly of the TTT complex composed of TELO2, TTI1 and TTI2 and the RUVBL complex composed of RUVBL1 and RUVBL2 into the TTT-RUVBL complex which leads to the dimerization of the mTORC1 complex and its subsequent activation. Forms a complex with APPL1 and APPL2. Interacts with ZNHIT2 (via HIT-type zinc finger) in the presence of ATP or ADP; shows a stronger interaction in the presence of ADP. The RUVBL1/RUVBL2 complex interacts with ZNHIT1 (via HIT-type zinc finger), ZNHIT3 (via HIT-type zinc finger), ZNHIT6 (via HIT-type zinc finger) and DDX59/ZNHIT5 (via HIT-type zinc finger) in the presence of ADP. Interacts with NOPCHAP1; the interaction is direct and disrupted upon ATP binding. Interacts with SMG1.

It is found in the nucleus matrix. It localises to the nucleus. The protein localises to the nucleoplasm. The protein resides in the cytoplasm. Its subcellular location is the membrane. It is found in the dynein axonemal particle. It carries out the reaction ATP + H2O = ADP + phosphate + H(+). Its function is as follows. Possesses single-stranded DNA-stimulated ATPase and ATP-dependent DNA helicase (5' to 3') activity; hexamerization is thought to be critical for ATP hydrolysis and adjacent subunits in the ring-like structure contribute to the ATPase activity. Component of the NuA4 histone acetyltransferase complex which is involved in transcriptional activation of select genes principally by acetylation of nucleosomal histones H4 and H2A. This modification may both alter nucleosome-DNA interactions and promote interaction of the modified histones with other proteins which positively regulate transcription. This complex may be required for the activation of transcriptional programs associated with oncogene and proto-oncogene mediated growth induction, tumor suppressor mediated growth arrest and replicative senescence, apoptosis, and DNA repair. The NuA4 complex ATPase and helicase activities seem to be, at least in part, contributed by the association of RUVBL1 and RUVBL2 with EP400. NuA4 may also play a direct role in DNA repair when recruited to sites of DNA damage. Component of a SWR1-like complex that specifically mediates the removal of histone H2A.Z/H2AZ1 from the nucleosome. Proposed core component of the chromatin remodeling INO80 complex which exhibits DNA- and nucleosome-activated ATPase activity and catalyzes ATP-dependent nucleosome sliding. Plays an essential role in oncogenic transformation by MYC and also modulates transcriptional activation by the LEF1/TCF1-CTNNB1 complex. May also inhibit the transcriptional activity of ATF2. Involved in the endoplasmic reticulum (ER)-associated degradation (ERAD) pathway where it negatively regulates expression of ER stress response genes. May play a role in regulating the composition of the U5 snRNP complex. In Mus musculus (Mouse), this protein is RuvB-like 2 (Ruvbl2).